The chain runs to 1030 residues: F-box/WD repeat-containing protein 10 (1030 aa).

Positions 280 to 329 (RDFIRDLPLHLSKYILRMLDKHSLNRCIFVSQHWATLAQQVKVDQSMHSF) constitute an F-box domain. 5 WD repeats span residues 466–505 (GHAG…CVRI), 508–547 (GHQG…KTFK), 549–584 (KDPI…LQKT), 587–624 (GHEG…ERCL), and 626–667 (AFKH…KVIK). Residues 709–773 (KNKVKKSKDK…LSSDDMETPV (65 aa)) form a disordered region. Positions 716–733 (KDKEEEREETSLGDEHSR) are enriched in basic and acidic residues. Over residues 734-749 (STIQGHSLKDSVSSKQ) the composition is skewed to polar residues. Residues 963 to 992 (FMLMTVKEEKEFAEAKMKEYEASVSTKEVD) are a coiled coil.

Its function is as follows. Probable substrate-recognition component of a SCF (SKP1-CUL1-F-box protein)-type E3 ubiquitin ligase complex which mediates the ubiquitination and subsequent proteasomal degradation of target proteins. Overexpression is leading to degradation of CBX5 and CBX1. The protein is F-box/WD repeat-containing protein 10 (Fbxw10) of Mus musculus (Mouse).